Consider the following 316-residue polypeptide: tRNA dimethylallyltransferase (316 aa).

17-24 lines the ATP pocket; sequence GPTASGKT. A substrate-binding site is contributed by 19–24; the sequence is TASGKT. Interaction with substrate tRNA regions lie at residues 42–45, 166–170, and 247–252; these read DSAL, QRLSR, and RCVGYR.

It belongs to the IPP transferase family. Monomer. Mg(2+) is required as a cofactor.

It carries out the reaction adenosine(37) in tRNA + dimethylallyl diphosphate = N(6)-dimethylallyladenosine(37) in tRNA + diphosphate. In terms of biological role, catalyzes the transfer of a dimethylallyl group onto the adenine at position 37 in tRNAs that read codons beginning with uridine, leading to the formation of N6-(dimethylallyl)adenosine (i(6)A). In Salmonella paratyphi C (strain RKS4594), this protein is tRNA dimethylallyltransferase.